Here is a 219-residue protein sequence, read N- to C-terminus: Small ribosomal subunit protein uS5 (219 aa).

The S5 DRBM domain maps to 52–115 (LDDEVLDINM…DVAKLNLISV (64 aa)). The tract at residues 196-219 (LRNASQSRTPRRAAAKQREQEVSE) is disordered.

The protein belongs to the universal ribosomal protein uS5 family. As to quaternary structure, part of the 30S ribosomal subunit. Contacts protein S4.

Functionally, with S4 and S12 plays an important role in translational accuracy. The sequence is that of Small ribosomal subunit protein uS5 from Haloquadratum walsbyi (strain DSM 16790 / HBSQ001).